The sequence spans 252 residues: MNKVVVKNVTFGEGAPKICVPMVGKTVAALKEEAEMLKTIDLDVVEWRVDFFEDVKDLVKVKAALDEIRAILPETPILFTFRSAKEGGELAVSDEFYFELNETLAGTGKIDLVDVELFNEEADVLRLIETAHKNNVKVVMSNHDFDKTPAKEEIVSRLTRMEALGADLPKIAVMPKSAGDVLTLLDATNTVSEKANQPIITMSMAGTGVISRLAGEVFGSAMTFGAAKKASAPGQIDVNELRHVLDLLHKQF.

Residues 46-48 (EWR) and Arg-82 contribute to the 3-dehydroquinate site. Catalysis depends on His-143, which acts as the Proton donor/acceptor. The Schiff-base intermediate with substrate role is filled by Lys-170. 3-dehydroquinate contacts are provided by Arg-212, Ser-231, and Gln-235.

Belongs to the type-I 3-dehydroquinase family. Homodimer.

It carries out the reaction 3-dehydroquinate = 3-dehydroshikimate + H2O. Its pathway is metabolic intermediate biosynthesis; chorismate biosynthesis; chorismate from D-erythrose 4-phosphate and phosphoenolpyruvate: step 3/7. Its function is as follows. Involved in the third step of the chorismate pathway, which leads to the biosynthesis of aromatic amino acids. Catalyzes the cis-dehydration of 3-dehydroquinate (DHQ) and introduces the first double bond of the aromatic ring to yield 3-dehydroshikimate. The polypeptide is 3-dehydroquinate dehydratase (Listeria innocua serovar 6a (strain ATCC BAA-680 / CLIP 11262)).